The following is a 276-amino-acid chain: Type II pantothenate kinase (276 aa).

8–15 (DAGGTLTK) provides a ligand contact to ATP. Glu76 acts as the Proton acceptor in catalysis. ATP-binding positions include Thr105, 127-131 (GGTIM), Phe143, and Ser230.

It belongs to the type II pantothenate kinase family. In terms of assembly, homodimer.

It is found in the cytoplasm. The catalysed reaction is (R)-pantothenate + ATP = (R)-4'-phosphopantothenate + ADP + H(+). Its pathway is cofactor biosynthesis; coenzyme A biosynthesis; CoA from (R)-pantothenate: step 1/5. In terms of biological role, catalyzes the phosphorylation of pantothenate (Pan), the first step in CoA biosynthesis. The polypeptide is Type II pantothenate kinase (Bacillus cereus (strain ATCC 10987 / NRS 248)).